The sequence spans 86 residues: Small ribosomal subunit protein bS20 (86 aa).

The protein belongs to the bacterial ribosomal protein bS20 family.

Its function is as follows. Binds directly to 16S ribosomal RNA. The protein is Small ribosomal subunit protein bS20 of Bifidobacterium longum (strain DJO10A).